We begin with the raw amino-acid sequence, 242 residues long: Biosynthetic peptidoglycan transglycosylase (242 aa).

A helical transmembrane segment spans residues 19–39 (ILAALAVFWGGGIALFSVVPV).

The protein belongs to the glycosyltransferase 51 family.

It is found in the cell inner membrane. It catalyses the reaction [GlcNAc-(1-&gt;4)-Mur2Ac(oyl-L-Ala-gamma-D-Glu-L-Lys-D-Ala-D-Ala)](n)-di-trans,octa-cis-undecaprenyl diphosphate + beta-D-GlcNAc-(1-&gt;4)-Mur2Ac(oyl-L-Ala-gamma-D-Glu-L-Lys-D-Ala-D-Ala)-di-trans,octa-cis-undecaprenyl diphosphate = [GlcNAc-(1-&gt;4)-Mur2Ac(oyl-L-Ala-gamma-D-Glu-L-Lys-D-Ala-D-Ala)](n+1)-di-trans,octa-cis-undecaprenyl diphosphate + di-trans,octa-cis-undecaprenyl diphosphate + H(+). It participates in cell wall biogenesis; peptidoglycan biosynthesis. Functionally, peptidoglycan polymerase that catalyzes glycan chain elongation from lipid-linked precursors. This chain is Biosynthetic peptidoglycan transglycosylase, found in Salmonella newport (strain SL254).